Reading from the N-terminus, the 1199-residue chain is Pyruvate-flavodoxin oxidoreductase (1199 aa).

2 4Fe-4S ferredoxin-type domains span residues 699-728 (EIPVWDTDICVQCSKCVMVCPHAAIRAKVY) and 755-784 (FTIQVAPEDCTGCAICVNVCPAKNKSEPSL). [4Fe-4S] cluster contacts are provided by Cys708, Cys711, Cys714, Cys718, Cys764, Cys767, Cys770, Cys774, Cys838, Cys841, Cys866, and Cys1103.

This sequence belongs to the pyruvate:ferredoxin/flavodoxin oxidoreductase family. Requires [4Fe-4S] cluster as cofactor.

It catalyses the reaction oxidized [flavodoxin] + pyruvate + CoA + 2 H(+) = reduced [flavodoxin] + acetyl-CoA + CO2. Oxidoreductase required for the transfer of electrons from pyruvate to flavodoxin, which reduces nitrogenase. This Nostoc sp. (strain PCC 7120 / SAG 25.82 / UTEX 2576) protein is Pyruvate-flavodoxin oxidoreductase (nifJ).